Consider the following 83-residue polypeptide: Translational regulator CsrA (83 aa).

The protein belongs to the CsrA/RsmA family. In terms of assembly, homodimer; the beta-strands of each monomer intercalate to form a hydrophobic core, while the alpha-helices form wings that extend away from the core.

The protein resides in the cytoplasm. Its function is as follows. A translational regulator that binds mRNA to regulate translation initiation and/or mRNA stability. Usually binds in the 5'-UTR at or near the Shine-Dalgarno sequence preventing ribosome-binding, thus repressing translation. Its main target seems to be the major flagellin gene, while its function is anatagonized by FliW. The polypeptide is Translational regulator CsrA (Thermotoga maritima (strain ATCC 43589 / DSM 3109 / JCM 10099 / NBRC 100826 / MSB8)).